The sequence spans 2138 residues: Protein virilizer homolog (2138 aa).

5 disordered regions span residues arginine 1503–valine 1574, asparagine 1638–glutamine 1664, proline 1855–glycine 1881, proline 2013–serine 2035, and tyrosine 2058–glycine 2094. Polar residues predominate over residues glutamate 1528 to glutamine 1541. Composition is skewed to polar residues over residues aspartate 1862–glycine 1881 and glutamine 2025–serine 2035.

It belongs to the vir family. Interacts with MTB, FIP37 and HAKAI. Associates with MTA, MTB, FIP37 and HAKAI to form the m6A writer complex which is essential for adenosine methylation at specific mRNA sequences.

The protein localises to the nucleus speckle. The protein resides in the nucleus. It is found in the nucleoplasm. Functionally, subunit of the N6-methyltransferase complex, a multiprotein complex that mediates N6-methyladenosine (m6A) methylation at the 5'-[AG]GAC-3' consensus sites of some mRNAs. Associates with MTA, MTB, FIP37 and HAKAI to form the m6A writer complex which is essential for adenosine methylation at specific mRNA sequences. N6-methyladenosine (m6A) plays a role in mRNA stability, processing, translation efficiency and editing. The protein is Protein virilizer homolog of Arabidopsis thaliana (Mouse-ear cress).